The following is a 953-amino-acid chain: 26S proteasome non-ATPase regulatory subunit 1 (953 aa).

N-acetylmethionine; partial is present on Met-1. Residue Thr-273 is modified to Phosphothreonine. The disordered stretch occupies residues 279–318 (PGSTNTGTVPGSEKDSDSMETEEKTGSAFVGKTPEASPEP). Ser-290 carries the phosphoserine modification. The span at 290–303 (SEKDSDSMETEEKT) shows a compositional bias: basic and acidic residues. Position 310 is an N6-acetyllysine (Lys-310). Thr-311 carries the post-translational modification Phosphothreonine. Residue Ser-315 is modified to Phosphoserine. 10 PC repeats span residues 403 to 436 (TATASLGVIHKGHEKEALQLMATYLPKDTSPGSA), 441 to 474 (GGLYALGLIHANHGGDIIDYLLNQLKNASNDIVR), 476 to 510 (GGSLGLGLAAMGTARQDVYDLLKTNLYQDDAVTGE), 511 to 545 (AAGLALGLVMLGSKNAQAIEDMVGYAQETQHEKIL), 547 to 580 (GLAVGIALVMYGRMEEADALIESLCRDKDPILRR), 581 to 616 (SGMYTVAMAYCGSGNNKAIRRLLHVAVSDVNDDVRR), 617 to 649 (AAVESLGFILFRTPEQCPSVVSLLSESYNPHVR), 651 to 685 (GAAMALGICCAGTGNKEAINLLEPMTNDPVNYVRQ), 686 to 726 (GALI…DVMA), and 729 to 761 (GAILAQGILDAGGHNVTISLQSRTGHTHMPSVV). Lys-720 is subject to N6-acetyllysine. Phosphothreonine is present on Thr-830. Ser-834 is modified (phosphoserine). Disordered regions lie at residues 839-881 (AKKK…LDNP) and 930-953 (AHGPKIEEEEQEPEPPEPFEYIDD). 2 stretches are compositionally biased toward basic and acidic residues: residues 842–852 (KEKEKEKKEEE) and 859–872 (AEKKEEKEKKKEPE). Residues 936–953 (EEEEQEPEPPEPFEYIDD) show a composition bias toward acidic residues.

Belongs to the proteasome subunit S1 family. In terms of assembly, component of the 19S proteasome regulatory particle complex. The 26S proteasome consists of a 20S core particle (CP) and two 19S regulatory subunits (RP). The regulatory particle is made of a lid composed of 9 subunits, a base containing 6 ATPases and few additional components including PSMD1. Interacts with ADRM1. Interacts with ZFAND1.

In terms of biological role, component of the 26S proteasome, a multiprotein complex involved in the ATP-dependent degradation of ubiquitinated proteins. This complex plays a key role in the maintenance of protein homeostasis by removing misfolded or damaged proteins, which could impair cellular functions, and by removing proteins whose functions are no longer required. Therefore, the proteasome participates in numerous cellular processes, including cell cycle progression, apoptosis, or DNA damage repair. In Pongo abelii (Sumatran orangutan), this protein is 26S proteasome non-ATPase regulatory subunit 1 (PSMD1).